We begin with the raw amino-acid sequence, 147 residues long: Large ribosomal subunit protein uL11 (147 aa).

This sequence belongs to the universal ribosomal protein uL11 family. In terms of assembly, part of the ribosomal stalk of the 50S ribosomal subunit. Interacts with L10 and the large rRNA to form the base of the stalk. L10 forms an elongated spine to which L12 dimers bind in a sequential fashion forming a multimeric L10(L12)X complex. Post-translationally, one or more lysine residues are methylated.

Functionally, forms part of the ribosomal stalk which helps the ribosome interact with GTP-bound translation factors. This is Large ribosomal subunit protein uL11 from Bacteroides fragilis (strain ATCC 25285 / DSM 2151 / CCUG 4856 / JCM 11019 / LMG 10263 / NCTC 9343 / Onslow / VPI 2553 / EN-2).